Reading from the N-terminus, the 211-residue chain is Ribonuclease T (211 aa).

Positions 24–198 (VVVDVETGGF…YDAEKTAHLF (175 aa)) constitute an Exonuclease domain. Residues D27, E29, H185, and D190 each coordinate Mg(2+). H185 serves as the catalytic Proton donor/acceptor.

Belongs to the RNase T family. As to quaternary structure, homodimer. It depends on Mg(2+) as a cofactor.

Functionally, trims short 3' overhangs of a variety of RNA species, leaving a one or two nucleotide 3' overhang. Responsible for the end-turnover of tRNA: specifically removes the terminal AMP residue from uncharged tRNA (tRNA-C-C-A). Also appears to be involved in tRNA biosynthesis. The protein is Ribonuclease T of Xylella fastidiosa (strain 9a5c).